The following is a 366-amino-acid chain: Protein lifeguard 1 (366 aa).

Residues 1-141 (MSHEKSFLVS…GPPSYYDNQD (141 aa)) form a disordered region. 2 stretches are compositionally biased toward pro residues: residues 14 to 44 (YPPP…PFQP) and 67 to 109 (GPYP…PNPY). The next 7 helical transmembrane spans lie at 160–180 (VFLV…VFTF), 192–212 (VWTY…LSCC), 223–243 (LVAL…IASF), 248–268 (AVIM…IFSM), 278–298 (VGVL…CIFI), 302–322 (VLEI…LAVD), and 341–361 (FAAL…LTII).

This sequence belongs to the BI1 family. LFG subfamily.

It localises to the membrane. Potential apoptotic regulator. The polypeptide is Protein lifeguard 1 (GRINA) (Bos taurus (Bovine)).